The following is a 1007-amino-acid chain: Glutamate receptor ionotropic, delta-2 (1007 aa).

The N-terminal stretch at 1–23 (MEVFPLLFFLSFWWSRTWDLATS) is a signal peptide. Positions 24 to 345 (DSIIHIGAIF…NAFHKKLEDR (322 aa)) are interaction with CBLN1 homotrimer. Residues 24–566 (DSIIHIGAIF…DMFACLAPFD (543 aa)) are Extracellular-facing. Disulfide bonds link Cys83/Cys355, Cys99/Cys131, and Cys298/Cys310. A glycan (N-linked (GlcNAc...) asparagine) is linked at Asn293. Asn426 carries an N-linked (GlcNAc...) asparagine glycan. The chain crosses the membrane as a helical span at residues 567 to 587 (LSLWACIAGTVLLVGLLVYLL). Over 588-635 (NWLNPPRLQMGSMTSTTLYNSMWFVYGSFVQQGGEVPYTTLATRMMMG) the chain is Cytoplasmic. The helical transmembrane segment at 636-656 (AWWLFALIVISSYTANLAAFL) threads the bilayer. The Extracellular segment spans residues 657 to 830 (TITRIESSIQ…QKGGALDIKS (174 aa)). Residues Asn713 and Asn716 are each glycosylated (N-linked (GlcNAc...) asparagine). Residues 831–851 (LAGVFCILAAGIVLSCLIAVL) form a helical membrane-spanning segment. The Cytoplasmic portion of the chain corresponds to 852–1007 (ETWWSRRKGS…GNDPDRGTSI (156 aa)). Phosphoserine is present on Ser883. Thr886 is subject to Phosphothreonine. Ser890 bears the Phosphoserine mark. The interaction with AP4M1 stretch occupies residues 921 to 991 (DFRNTHITTT…MSSIPYQPTP (71 aa)). The short motif at 1005–1007 (TSI) is the PDZ-binding element. The residue at position 1006 (Ser1006) is a Phosphoserine.

This sequence belongs to the glutamate-gated ion channel (TC 1.A.10.1) family. GRID2 subfamily. In terms of assembly, tetramer; dimer of dimers. Interacts with AP4M1. Interacts with EML2. Interacts with MAGI2 (via PDZ domains). Interacts with BECN1, GOPC, GRID2IP, SHANK1 and SHANK2. Interacts with CBLN2, but not with CBLN4. Interacts with CBLN1 (via C1q domain); the interaction is CBLN1-NRX1 complex formation-dependent; CBLN1-binding is calcium-independent; CBLN1 hexamers anchor GRID2 N-terminal domain dimers to monomeric NRXN1 isoform beta; promotes synaptogenesis and mediates the D-Serine-dependent long term depression signals and AMPA receptor endocytosis. As to expression, expressed at high levels in the cerebellar Purkinje cell layer, almost absent in the forebrain.

Its subcellular location is the postsynaptic cell membrane. The catalysed reaction is Ca(2+)(in) = Ca(2+)(out). It catalyses the reaction Na(+)(in) = Na(+)(out). Its function is as follows. Member of the ionotropic glutamate receptor family, which plays a crucial role in synaptic organization and signal transduction in the central nervous system. Although it shares structural features with ionotropic glutamate receptors, does not bind glutamate as a primary ligand. Promotes synaptogenesis and mediates the D-Serine-dependent long term depression signals and AMPA receptor endocytosis of cerebellar parallel fiber-Purkinje cell (PF-PC) synapses through the NRX1B-CBLN1-GRID2 triad complex. In the presence of neurexins and cerebellins, forms cation-selective channels that are proposed to be gated by glycine and D-serine. However, recent research disputes this ligand-gated cation channel activity. Cation-selective ion channel activity can be triggered by GRM1 in Purkinje cells. This chain is Glutamate receptor ionotropic, delta-2 (Grid2), found in Rattus norvegicus (Rat).